The sequence spans 102 residues: MDKLQKMISEKSVVIFSKNSCCMSHTIKTLFIDFGVNPTIYELDEINRGKEIEQALAQLGCSPTVPVVFIGGQLVGGANQVMSLHLNRSLVPMLKRVGALWL.

The region spanning 1 to 101 (MDKLQKMISE…PMLKRVGALW (101 aa)) is the Glutaredoxin domain. Residue C21 participates in [2Fe-2S] cluster binding. The short motif at 99 to 102 (ALWL) is the Responsive for interaction with TGA factors element.

The protein belongs to the glutaredoxin family. CC-type subfamily.

The protein resides in the cytoplasm. The protein localises to the nucleus. In terms of biological role, may only reduce GSH-thiol disulfides, but not protein disulfides. The protein is Monothiol glutaredoxin-S4 (GRXS4) of Arabidopsis thaliana (Mouse-ear cress).